The sequence spans 134 residues: MAEVIGYYGTGRRKTAVARVYLRPGEGKVKVNGKEYESLNDYFKNPAWTKHAIEPLEVTNTLGKFDLVIRVNGGGLSGQSGAVRLGIARALLQYDQKLRPVLKKYKMLTRDPREVERKKYGLKKARRAPQFSKR.

Residues 113 to 134 (REVERKKYGLKKARRAPQFSKR) are disordered. The span at 120-134 (YGLKKARRAPQFSKR) shows a compositional bias: basic residues.

This sequence belongs to the universal ribosomal protein uS9 family.

This Thermotoga petrophila (strain ATCC BAA-488 / DSM 13995 / JCM 10881 / RKU-1) protein is Small ribosomal subunit protein uS9.